A 510-amino-acid chain; its full sequence is Maturase K (510 aa).

The protein belongs to the intron maturase 2 family. MatK subfamily.

It localises to the plastid. The protein resides in the chloroplast. Usually encoded in the trnK tRNA gene intron. Probably assists in splicing its own and other chloroplast group II introns. In Taxus cuspidata (Japanese yew), this protein is Maturase K.